Reading from the N-terminus, the 347-residue chain is MNPMTFTVLLATIMSGTSIVLLSSHWFMTWLGFEMNMMAIIPVLMKKYNPRSMEAATKYFLTQATASMILVLAIIINTMYSGQWTIMNMENQLASILITLALVMKLGLAPFHFWVPEVTQGVSLDSGLILLTWQKIAPLSLLYQIYPSLNTNLLLTMSLLSIMIGGWGGLNQTQLRKIMAYSSIAHMGWMIAIMTYNPNLSLLNLIIYITMTSSMFMLLIINSTTSTLSLSLTWNKTPIVTTMMLISLLSLGGLPPLTGFMPKWMIIQELTKNNSLILPTLMSILALLNLFFYMRLAYSTTLTMFPTTNNTKLSWQFKNTNILPTTAPLISISTMILPLTPLLITLN.

The next 11 helical transmembrane spans lie at 3–23 (PMTF…VLLS), 25–45 (HWFM…PVLM), 59–79 (YFLT…INTM), 96–116 (ILIT…FWVP), 127–147 (GLIL…QIYP), 149–169 (LNTN…GWGG), 178–198 (IMAY…TYNP), 201–221 (SLLN…LLII), 239–259 (IVTT…PLTG), 274–294 (NSLI…FFYM), and 326–346 (TAPL…LITL).

This sequence belongs to the complex I subunit 2 family. Core subunit of respiratory chain NADH dehydrogenase (Complex I) which is composed of 45 different subunits. Interacts with TMEM242.

It localises to the mitochondrion inner membrane. It catalyses the reaction a ubiquinone + NADH + 5 H(+)(in) = a ubiquinol + NAD(+) + 4 H(+)(out). In terms of biological role, core subunit of the mitochondrial membrane respiratory chain NADH dehydrogenase (Complex I) which catalyzes electron transfer from NADH through the respiratory chain, using ubiquinone as an electron acceptor. Essential for the catalytic activity and assembly of complex I. The chain is NADH-ubiquinone oxidoreductase chain 2 from Sylvisorex ollula (Greater forest shrew).